We begin with the raw amino-acid sequence, 1198 residues long: Tetratricopeptide repeat protein 17 (1198 aa).

One copy of the TPR 1 repeat lies at 295–328 (FTSYYTLGNIYAMLGEYNHSVLCYDHALQAKPGF). Residues 340–382 (CQQKLEQKLEAQHRSLQRTLNELKEYQKQHDHYLRQQEILEKH) adopt a coiled-coil conformation. TPR repeat units lie at residues 619 to 652 (WLIL…APVQ) and 689 to 722 (PLTF…TTRC). Disordered stretches follow at residues 771–825 (PQSL…KSEE) and 903–924 (KKPK…QAEN). Positions 903-914 (KKPKGDHKKPPG) are enriched in basic residues. 3 TPR repeats span residues 1071-1105 (SWVL…APHQ), 1108-1141 (DVPL…APHF), and 1142-1175 (AVNH…QPEF).

This sequence belongs to the TTC17 family. In terms of assembly, interacts with CATIP. As to expression, expressed in germ cells as well as in somatic cells of the testis (at protein level). Ubiquitous.

It is found in the cytoplasm. The protein resides in the cell membrane. It localises to the cytoskeleton. Functionally, plays a role in primary ciliogenesis by modulating actin polymerization. The protein is Tetratricopeptide repeat protein 17 (Ttc17) of Rattus norvegicus (Rat).